Consider the following 134-residue polypeptide: Transcription antitermination protein NusB (134 aa).

This sequence belongs to the NusB family.

In terms of biological role, involved in transcription antitermination. Required for transcription of ribosomal RNA (rRNA) genes. Binds specifically to the boxA antiterminator sequence of the ribosomal RNA (rrn) operons. The chain is Transcription antitermination protein NusB from Shewanella baltica (strain OS223).